We begin with the raw amino-acid sequence, 305 residues long: Target of rapamycin complex subunit LST8-1 (305 aa).

7 WD repeats span residues 1 to 30 (MSQP…CYRT), 33 to 71 (YPDS…PQPV), 76 to 115 (SHTN…CQKE), 117 to 156 (ESVA…CSCE), 160 to 199 (EVDT…QTMT), 209 to 248 (AHNG…LEKV), and 251 to 292 (GHQR…KVYQ).

Belongs to the WD repeat LST8 family. As to quaternary structure, the target of rapamycin complex 1 (TORC1) is composed of at least RAPTOR, LST8 and TOR. Interacts with TOR. Expressed in the root central cylinder, root tips, emerging lateral roots, vasculature of cotyledons, leaf stomata, leaf stipules, anthers, pollen, filaments, and vasculature of petals and sepals.

The protein resides in the endosome. Its function is as follows. Component of TORC1 complex, which is an essential cell growth regulator that controls plant development. Acts by activating transcription, protein synthesis and ribosome biogenesis, and inhibiting mRNA degradation and autophagy. Involved in regulating amino acid accumulation and the synthesis of myo-inositol and raffinose during plant adaptation to long days. Involved in the regulation of plant growth and abscisic acid (ABA) accumulation. Acts as a positive regulation of the ABA biosynthetic genes ZEP, NCED3 and AAO3, and negative regulator of the ABA catabolic genes CYP707A2 and CYP707A3. This Arabidopsis thaliana (Mouse-ear cress) protein is Target of rapamycin complex subunit LST8-1.